A 238-amino-acid polypeptide reads, in one-letter code: Ubiquinone biosynthesis O-methyltransferase (238 aa).

S-adenosyl-L-methionine contacts are provided by Arg-40, Gly-59, Asp-81, and Met-126.

Belongs to the methyltransferase superfamily. UbiG/COQ3 family.

It carries out the reaction a 3-demethylubiquinol + S-adenosyl-L-methionine = a ubiquinol + S-adenosyl-L-homocysteine + H(+). It catalyses the reaction a 3-(all-trans-polyprenyl)benzene-1,2-diol + S-adenosyl-L-methionine = a 2-methoxy-6-(all-trans-polyprenyl)phenol + S-adenosyl-L-homocysteine + H(+). It functions in the pathway cofactor biosynthesis; ubiquinone biosynthesis. O-methyltransferase that catalyzes the 2 O-methylation steps in the ubiquinone biosynthetic pathway. The sequence is that of Ubiquinone biosynthesis O-methyltransferase from Neisseria meningitidis serogroup C (strain 053442).